A 253-amino-acid chain; its full sequence is Malonyl-[acyl-carrier protein] O-methyltransferase (253 aa).

The protein belongs to the methyltransferase superfamily.

It catalyses the reaction malonyl-[ACP] + S-adenosyl-L-methionine = malonyl-[ACP] methyl ester + S-adenosyl-L-homocysteine. It functions in the pathway cofactor biosynthesis; biotin biosynthesis. Functionally, converts the free carboxyl group of a malonyl-thioester to its methyl ester by transfer of a methyl group from S-adenosyl-L-methionine (SAM). It allows to synthesize pimeloyl-ACP via the fatty acid synthetic pathway. The chain is Malonyl-[acyl-carrier protein] O-methyltransferase from Pectobacterium atrosepticum (strain SCRI 1043 / ATCC BAA-672) (Erwinia carotovora subsp. atroseptica).